Reading from the N-terminus, the 548-residue chain is T-complex protein 1 subunit theta (548 aa).

Ala2 carries the N-acetylalanine modification. The ADP site is built by Tyr47 and Gly48. Asp99 provides a ligand contact to Mg(2+). The ADP site is built by Gly100, Thr101, Asn102, Phe103, Met169, Ser170, Lys171, Gly412, and Asp499. Residues Gly100, Thr101, and Asn102 each contribute to the ATP site. Positions 170, 171, 412, 499, and 504 each coordinate ATP. Tyr505 is subject to Phosphotyrosine. Residues 529 to 548 form a disordered region; sequence PAGGPKPPSGKKDWDEDQND.

As to quaternary structure, component of the chaperonin-containing T-complex (TRiC), a hexadecamer composed of two identical back-to-back stacked rings enclosing a protein folding chamber. Each ring is made up of eight different subunits: TCP1/CCT1, CCT2, CCT3, CCT4, CCT5, CCT6A/CCT6, CCT7, CCT8.

The protein resides in the cytoplasm. It is found in the cytoskeleton. Its subcellular location is the microtubule organizing center. The protein localises to the centrosome. It localises to the cilium basal body. It catalyses the reaction ATP + H2O = ADP + phosphate + H(+). In terms of biological role, component of the chaperonin-containing T-complex (TRiC), a molecular chaperone complex that assists the folding of actin, tubulin and other proteins upon ATP hydrolysis. This is T-complex protein 1 subunit theta from Gallus gallus (Chicken).